A 178-amino-acid chain; its full sequence is MKFLSDLLPVLLFFAAYSLTGNIYLATGVAIVSTAAQVGISWFKHRKVEPMQWVSLALILVLGGLTLVLHDKRFIMWKPTVLYWLLGAGFLISDLAFRKNPIKAMMGKQIELPERLWAKLTFAWSGFFAFMGALNLFVAFNFSEAVWVNFKLFGGMGLMLVFVLAQGMVLSRYIQEKN.

A run of 5 helical transmembrane segments spans residues 12–32 (LFFA…VAIV), 50–70 (PMQW…LVLH), 74–94 (FIMW…LISD), 120–140 (LTFA…FVAF), and 145–165 (AVWV…FVLA).

Belongs to the YciB family.

It localises to the cell inner membrane. In terms of biological role, plays a role in cell envelope biogenesis, maintenance of cell envelope integrity and membrane homeostasis. This is Inner membrane-spanning protein YciB from Laribacter hongkongensis (strain HLHK9).